Consider the following 704-residue polypeptide: Polyribonucleotide nucleotidyltransferase (704 aa).

2 residues coordinate Mg(2+): D487 and D493. In terms of domain architecture, KH spans 554-613 (PRLLTIKIHPDKIREVIGKGGSTIQAITKETGTQIDIQDDGTIIIASVNAIAAQAAKSRI). In terms of domain architecture, S1 motif spans 623–691 (GRIYEGKVAK…KQGRIRLSIK (69 aa)).

It belongs to the polyribonucleotide nucleotidyltransferase family. Component of the RNA degradosome, which is a multiprotein complex involved in RNA processing and mRNA degradation. Mg(2+) serves as cofactor.

The protein resides in the cytoplasm. It catalyses the reaction RNA(n+1) + phosphate = RNA(n) + a ribonucleoside 5'-diphosphate. Functionally, involved in mRNA degradation. Catalyzes the phosphorolysis of single-stranded polyribonucleotides processively in the 3'- to 5'-direction. This chain is Polyribonucleotide nucleotidyltransferase, found in Xanthomonas euvesicatoria pv. vesicatoria (strain 85-10) (Xanthomonas campestris pv. vesicatoria).